We begin with the raw amino-acid sequence, 38 residues long: Potassium channel toxin alpha-KTx 3.3 (38 aa).

Disulfide bonds link cysteine 8-cysteine 28, cysteine 14-cysteine 33, and cysteine 18-cysteine 35. Positions 26-33 (GKCMNRKC) are interaction with Ca(2+)-activated K(+) channels.

This sequence belongs to the short scorpion toxin superfamily. Potassium channel inhibitor family. Alpha-KTx 03 subfamily. As to expression, expressed by the venom gland.

The protein resides in the secreted. Its function is as follows. Potent inhibitor of shaker potassium channels as well as the mammalian homologs of shaker. The chain is Potassium channel toxin alpha-KTx 3.3 from Leiurus hebraeus (Hebrew deathstalker scorpion).